A 303-amino-acid polypeptide reads, in one-letter code: Probable cell division protein WhiA (303 aa).

The H-T-H motif DNA-binding region spans 272-303 (SIQQVADALEFPITKSGVNHRLRKINKIADDL).

It belongs to the WhiA family.

Its function is as follows. Involved in cell division and chromosome segregation. The polypeptide is Probable cell division protein WhiA (Streptococcus pyogenes serotype M1).